Reading from the N-terminus, the 1059-residue chain is Ubiquitin carboxyl-terminal hydrolase 36 (1059 aa).

2 disordered regions span residues 22-45 (LGGNSSAGSSTDQAKSGEDTNGSL) and 102-145 (GKLV…KPKR). A compositionally biased stretch (polar residues) spans 23-45 (GGNSSAGSSTDQAKSGEDTNGSL). A compositionally biased stretch (low complexity) spans 121 to 138 (HPNNQSHHNHPHPTSNPN). The 290-residue stretch at 168–457 (TGMINVGNTC…NAYIMFFELD (290 aa)) folds into the USP domain. Residue cysteine 177 is the Nucleophile of the active site. The active-site Proton acceptor is histidine 416. Disordered stretches follow at residues 464–512 (PPAN…YTNG), 554–853 (ATSA…VTSN), 941–1005 (RQRD…FYNQ), and 1022–1059 (FGGAGSAKFQQQRALQRHLSAGGGFSRRQPSAQQQQQT). Low complexity-rich tracts occupy residues 479–494 (STTPVPAATVSSPSPT) and 561–580 (NGNKSSSPSSNSSSNHKSIN). Residues serine 490 and serine 492 each carry the phosphoserine modification. Polar residues predominate over residues 603–615 (TTAQLPSMPNMTE). 2 positions are modified to phosphothreonine: threonine 632 and threonine 636. Residues serine 646 and serine 648 each carry the phosphoserine modification. The span at 673–702 (ESGQTNGHSKTNGSLTNGSASSSVHVNNSK) shows a compositional bias: polar residues. Positions 703-720 (QKTDAIDEIFKSLKKSAD) are enriched in basic and acidic residues. The residue at position 721 (serine 721) is a Phosphoserine. Positions 721 to 730 (SEEDDDEEEP) are enriched in acidic residues. The segment covering 740 to 750 (PQKQSQSQSKA) has biased composition (low complexity). The span at 751 to 760 (PPSPKTPPSP) shows a compositional bias: pro residues. Serine 753 is modified (phosphoserine). Phosphothreonine is present on threonine 756. At serine 759 the chain carries Phosphoserine. Positions 779-788 (DAIDDDDDAV) are enriched in acidic residues. Threonine 799 carries the post-translational modification Phosphothreonine. Residues 806 to 818 (NPFSSSKPSTDSP) are compositionally biased toward polar residues. Serine 817 bears the Phosphoserine mark. Position 820 is a phosphothreonine (threonine 820). Residues 833–853 (ALKSHQQPRVGNGYQSNVTSN) show a composition bias toward polar residues. A compositionally biased stretch (low complexity) spans 963-974 (SGSAKGNNASNS).

It belongs to the peptidase C19 family. Interacts with atms/PAF1, but not with CycT.

It localises to the nucleus. It is found in the nucleolus. It carries out the reaction Thiol-dependent hydrolysis of ester, thioester, amide, peptide and isopeptide bonds formed by the C-terminal Gly of ubiquitin (a 76-residue protein attached to proteins as an intracellular targeting signal).. Its function is as follows. Required for maintaining multiple types of adult stem cells, including male and female germline, epithelial follicle cell and intestinal stem cells. May function as a transcriptional repressor by continually deubiquiting histone H2B at the promoters of genes critical for cellular differentiation, thereby preventing histone H3 'Lys-4' trimethylation (H3K4). Controls selective autophagy activation by ubiquitinated proteins. The polypeptide is Ubiquitin carboxyl-terminal hydrolase 36 (Usp36) (Drosophila sechellia (Fruit fly)).